We begin with the raw amino-acid sequence, 932 residues long: Beta-mannosidase A (932 aa).

Residues Met-1 to Pro-19 form the signal peptide. N-linked (GlcNAc...) asparagine glycosylation is found at Asn-41, Asn-81, Asn-94, Asn-249, Asn-261, Asn-284, Asn-289, Asn-318, and Asn-348. Glu-480 acts as the Proton donor in catalysis. N-linked (GlcNAc...) asparagine glycosylation is found at Asn-538, Asn-551, Asn-609, Asn-624, Asn-632, Asn-659, Asn-739, and Asn-791.

It belongs to the glycosyl hydrolase 2 family. Beta-mannosidase A subfamily. As to quaternary structure, homodimer.

The protein resides in the secreted. It catalyses the reaction Hydrolysis of terminal, non-reducing beta-D-mannose residues in beta-D-mannosides.. The protein operates within glycan metabolism; N-glycan degradation. Exoglycosidase that cleaves the single beta-linked mannose residue from the non-reducing end of beta-mannosidic oligosaccharides of various complexity and length. Involved in the degradation of polymeric mannan and galactomannan. The sequence is that of Beta-mannosidase A (mndA) from Aspergillus terreus (strain NIH 2624 / FGSC A1156).